We begin with the raw amino-acid sequence, 299 residues long: Recombination-associated protein RdgC (299 aa).

The protein belongs to the RdgC family.

Its subcellular location is the cytoplasm. The protein resides in the nucleoid. Its function is as follows. May be involved in recombination. This chain is Recombination-associated protein RdgC, found in Neisseria meningitidis serogroup B (strain ATCC BAA-335 / MC58).